Consider the following 294-residue polypeptide: N-acetylmuramic acid 6-phosphate etherase (294 aa).

The 164-residue stretch at 54–217 (VIQSFEEEGR…STASMIGVGK (164 aa)) folds into the SIS domain. Catalysis depends on Glu-82, which acts as the Proton donor. Residue Glu-113 is part of the active site.

Belongs to the GCKR-like family. MurNAc-6-P etherase subfamily. As to quaternary structure, homodimer.

The enzyme catalyses N-acetyl-D-muramate 6-phosphate + H2O = N-acetyl-D-glucosamine 6-phosphate + (R)-lactate. It functions in the pathway amino-sugar metabolism; N-acetylmuramate degradation. In terms of biological role, specifically catalyzes the cleavage of the D-lactyl ether substituent of MurNAc 6-phosphate, producing GlcNAc 6-phosphate and D-lactate. The chain is N-acetylmuramic acid 6-phosphate etherase from Bacillus anthracis (strain A0248).